The chain runs to 1600 residues: THO complex subunit 2 (1600 aa).

Positions 1-163 (MAAAAVVVPA…KLFYKQQKFN (163 aa)) are anchor domain; interaction with THOC5 and THOC7. The segment at 164–534 (LLREENEGYA…GQWKNETYNS (371 aa)) is bow domain; interaction with THOC1 dock domain and THOC3. The stretch at 293–339 (NCIMDEHKREIAEAKQIVRKLTMVVLSSEKMDDREKEKEKEEEKVEK) forms a coiled coil. The segment at 321–341 (EKMDDREKEKEKEEEKVEKPP) is disordered. The segment at 535-686 (HPLLVKVKAQ…LILKEVVQKM (152 aa)) is MIF4G domain; interaction with THOC3 and DDX39B. A stern domain region spans residues 687–1174 (AGIEITEEMT…LAMGYSGQLK (488 aa)). Residues 896-965 (HTSYEREVNK…LKLEKDNWLL (70 aa)) are a coiled coil. Residues 923–928 (KKKKEK) carry the Nuclear localization signal motif. The segment at 1175 to 1597 (SRKSYMIPEN…FHLDVFSQYN (423 aa)) is charged domain. Residues 1184–1600 (NEFHHKDPSP…DVFSQYNGKL (417 aa)) are disordered. A compositionally biased stretch (low complexity) spans 1208 to 1217 (PSPSSTGSTS). Over residues 1218-1234 (KSDESSAEETDKSRERS) the composition is skewed to basic and acidic residues. Ser-1222 is modified (phosphoserine). The span at 1251–1263 (GNSSNGNSGSNSN) shows a compositional bias: low complexity. 3 stretches are compositionally biased toward basic and acidic residues: residues 1265–1285 (AVKE…KEKT), 1294–1343 (ILGK…EKFK), and 1353–1383 (SSQE…KGGE). Thr-1385 bears the Phosphothreonine mark. 3 positions are modified to phosphoserine: Ser-1390, Ser-1393, and Ser-1417. Polar residues predominate over residues 1416-1425 (PSPSHSSTVK). Thr-1443 is modified (phosphothreonine). Over residues 1449–1504 (KSKEREMDKKDLDKSRERSREREKKDEKDRKERKRDHSNSDREVPPDLTKRRKEEN) the composition is skewed to basic and acidic residues. 3 positions are modified to phosphoserine: Ser-1450, Ser-1486, and Ser-1516. Residues 1464–1491 (RERSREREKKDEKDRKERKRDHSNSDRE) adopt a coiled-coil conformation. Over residues 1524 to 1585 (NEKDKEKNKS…SSGGKEEKKQ (62 aa)) the composition is skewed to basic and acidic residues.

The protein belongs to the THOC2 family. Component of the THO subcomplex, which is composed of THOC1, THOC2, THOC3, THOC5, THOC6 and THOC7. The THO subcomplex interacts with DDX39B to form the THO-DDX39B complex which multimerizes into a 28-subunit tetrameric assembly. Component of the transcription/export (TREX) complex at least composed of ALYREF/THOC4, DDX39B, SARNP/CIP29, CHTOP and the THO subcomplex; in the complex interacts with THOC1, THOC3, THOC5, THOC7 and DDX39B. TREX seems to have a dynamic structure involving ATP-dependent remodeling. Interacts with POLDIP3 and ZC3H11A.

It localises to the nucleus. The protein localises to the nucleus speckle. It is found in the cytoplasm. Functionally, component of the THO subcomplex of the TREX complex which is thought to couple mRNA transcription, processing and nuclear export, and which specifically associates with spliced mRNA and not with unspliced pre-mRNA. Required for efficient export of polyadenylated RNA and spliced mRNA. The THOC1-THOC2-THOC3 core complex alone is sufficient to bind export factor NXF1-NXT1 and promote ATPase activity of DDX39B; in the complex THOC2 is the only component that directly interacts with DDX39B. TREX is recruited to spliced mRNAs by a transcription-independent mechanism, binds to mRNA upstream of the exon-junction complex (EJC) and is recruited in a splicing- and cap-dependent manner to a region near the 5' end of the mRNA where it functions in mRNA export to the cytoplasm via the TAP/NXF1 pathway. Required for NXF1 localization to the nuclear rim. THOC2 (and probably the THO complex) is involved in releasing mRNA from nuclear speckle domains. Plays a role for proper neuronal development. This is THO complex subunit 2 (THOC2) from Plecturocebus moloch (Dusky titi monkey).